Here is a 256-residue protein sequence, read N- to C-terminus: Trans-aconitate 2-methyltransferase (256 aa).

It belongs to the methyltransferase superfamily. Tam family.

It is found in the cytoplasm. It carries out the reaction trans-aconitate + S-adenosyl-L-methionine = (E)-3-(methoxycarbonyl)pent-2-enedioate + S-adenosyl-L-homocysteine. Catalyzes the S-adenosylmethionine monomethyl esterification of trans-aconitate. The sequence is that of Trans-aconitate 2-methyltransferase from Rhodopseudomonas palustris (strain BisA53).